Here is a 95-residue protein sequence, read N- to C-terminus: Co-chaperonin GroES (95 aa).

It belongs to the GroES chaperonin family. As to quaternary structure, heptamer of 7 subunits arranged in a ring. Interacts with the chaperonin GroEL.

The protein localises to the cytoplasm. Its function is as follows. Together with the chaperonin GroEL, plays an essential role in assisting protein folding. The GroEL-GroES system forms a nano-cage that allows encapsulation of the non-native substrate proteins and provides a physical environment optimized to promote and accelerate protein folding. GroES binds to the apical surface of the GroEL ring, thereby capping the opening of the GroEL channel. The protein is Co-chaperonin GroES of Cereibacter sphaeroides (strain KD131 / KCTC 12085) (Rhodobacter sphaeroides).